We begin with the raw amino-acid sequence, 460 residues long: Glutamyl-tRNA reductase (460 aa).

Substrate is bound by residues 48-51, S100, 105-107, and Q111; these read TCNR and EDQ. C49 (nucleophile) is an active-site residue. 180–185 contacts NADP(+); the sequence is GAGEIG.

Belongs to the glutamyl-tRNA reductase family. As to quaternary structure, homodimer.

The catalysed reaction is (S)-4-amino-5-oxopentanoate + tRNA(Glu) + NADP(+) = L-glutamyl-tRNA(Glu) + NADPH + H(+). It participates in porphyrin-containing compound metabolism; protoporphyrin-IX biosynthesis; 5-aminolevulinate from L-glutamyl-tRNA(Glu): step 1/2. In terms of biological role, catalyzes the NADPH-dependent reduction of glutamyl-tRNA(Glu) to glutamate 1-semialdehyde (GSA). The polypeptide is Glutamyl-tRNA reductase (Methanosarcina acetivorans (strain ATCC 35395 / DSM 2834 / JCM 12185 / C2A)).